Consider the following 919-residue polypeptide: Probable dipeptidyl-aminopeptidase B (919 aa).

The segment covering Met1–Thr10 has biased composition (basic and acidic residues). The interval Met1–Gly53 is disordered. The Cytoplasmic segment spans residues Met1 to Arg92. The span at Ser21–Ser38 shows a compositional bias: low complexity. A helical; Signal-anchor for type II membrane protein membrane pass occupies residues Ile93–Leu113. Residues Thr114 to Pro919 are Vacuolar-facing. Residues Asn200, Asn352, and Asn643 are each glycosylated (N-linked (GlcNAc...) asparagine). Residue Ser757 is the Charge relay system of the active site. An N-linked (GlcNAc...) asparagine glycan is attached at Asn811. Residues Asp834 and His867 each act as charge relay system in the active site.

It belongs to the peptidase S9B family.

The protein localises to the vacuole membrane. It catalyses the reaction Release of an N-terminal dipeptide, Xaa-Yaa-|-Zaa-, from a polypeptide, preferentially when Yaa is Pro, provided Zaa is neither Pro nor hydroxyproline.. Its function is as follows. Type IV dipeptidyl-peptidase which removes N-terminal dipeptides sequentially from polypeptides having unsubstituted N-termini provided that the penultimate residue is proline. The polypeptide is Probable dipeptidyl-aminopeptidase B (dapB) (Aspergillus fumigatus (strain CBS 144.89 / FGSC A1163 / CEA10) (Neosartorya fumigata)).